The primary structure comprises 360 residues: Nucleoporin SEH1-B (360 aa).

WD repeat units lie at residues 10-49 (DHKD…NWHC), 55-96 (THSG…SNDK), 111-152 (DSRT…NLSQ), 160-210 (SCKL…RKYA), 217-258 (SVSD…KELS), and 276-315 (NHNS…NWKC).

The protein belongs to the WD repeat SEC13 family. As to quaternary structure, component of the Nup107-160 subcomplex of the nuclear pore complex (NPC). The Nup107-160 subcomplex includes NUP160, NUP133, NUP107, NUP98, NUP85, NUP43, NUP37, SEH1 and SEC13. Component of the GATOR2 subcomplex, composed of MIOS, SEC13, SEH1L, WDR24 and WDR59. The GATOR2 complex interacts with CASTOR1 and CASTOR2; the interaction is negatively regulated by arginine. The GATOR2 complex interacts with SESN1, SESN2 and SESN3; the interaction is negatively regulated by amino acids.

Its subcellular location is the chromosome. The protein resides in the centromere. The protein localises to the kinetochore. It localises to the nucleus. It is found in the nuclear pore complex. Its subcellular location is the lysosome membrane. With respect to regulation, the GATOR2 complex is negatively regulated by the upstream amino acid sensors CASTOR1 and SESN2, which sequester the GATOR2 complex in absence of amino acids. In the presence of abundant amino acids, GATOR2 is released from CASTOR1 and SESN2 and activated. Component of the Nup107-160 subcomplex of the nuclear pore complex (NPC). The Nup107-160 subcomplex is required for the assembly of a functional NPC. The Nup107-160 subcomplex is also required for normal kinetochore microtubule attachment, mitotic progression and chromosome segregation. This subunit plays a role in recruitment of the Nup107-160 subcomplex to the kinetochore. Its function is as follows. As a component of the GATOR2 complex, functions as an activator of the amino acid-sensing branch of the mTORC1 signaling pathway. The GATOR2 complex indirectly activates mTORC1 through the inhibition of the GATOR1 subcomplex. GATOR2 probably acts as an E3 ubiquitin-protein ligase toward GATOR1. In the presence of abundant amino acids, the GATOR2 complex mediates ubiquitination of the NPRL2 core component of the GATOR1 complex, leading to GATOR1 inactivation. In the absence of amino acids, GATOR2 is inhibited, activating the GATOR1 complex. The polypeptide is Nucleoporin SEH1-B (seh1l-b) (Xenopus laevis (African clawed frog)).